Here is a 438-residue protein sequence, read N- to C-terminus: LIM domain-containing protein C4F6.12 (438 aa).

Disordered stretches follow at residues 1–37 (MHSP…NNLV) and 49–78 (TGGR…TIKQ). Residues 24 to 37 (SPVSTNGSPLNNLV) are compositionally biased toward polar residues. A phosphoserine mark is found at Ser-67 and Ser-96. 3 LIM zinc-binding domains span residues 256 to 316 (KSCH…QFSP), 318 to 375 (CKHC…NKYA), and 376 to 435 (VKCK…SVKF).

This chain is LIM domain-containing protein C4F6.12, found in Schizosaccharomyces pombe (strain 972 / ATCC 24843) (Fission yeast).